Here is a 392-residue protein sequence, read N- to C-terminus: Speckle-type POZ protein-like B (392 aa).

An MATH domain is found at Lys31–Val161. Residues Thr200–Glu267 form the BTB domain.

The protein belongs to the Tdpoz family. As to quaternary structure, homodimer. Heterodimer with SPOP. Component of cullin-RING-based BCR (BTB-CUL3-RBX1) E3 ubiquitin-protein ligase complexes containing homodimeric SPOPL or the heterodimer formed by SPOP and SPOPL.

It localises to the nucleus. Its pathway is protein modification; protein ubiquitination. Its function is as follows. Component of a cullin-RING-based BCR (BTB-CUL3-RBX1) E3 ubiquitin-protein ligase complex that mediates the ubiquitination and subsequent proteasomal degradation of target proteins, but with relatively low efficiency. The polypeptide is Speckle-type POZ protein-like B (spoplb) (Danio rerio (Zebrafish)).